The sequence spans 564 residues: Phomacin cluster regulator phmR (564 aa).

The zn(2)-C6 fungal-type DNA-binding region spans 33-64; sequence CDRCRGHKLRCIRDQMTVDSPCQRCRKAREKC. Disordered stretches follow at residues 68 to 93, 152 to 197, and 252 to 278; these read SSTR…TSSA, DFAD…NPFL, and PIHP…DSTT. Polar residues-rich tracts occupy residues 182-192 and 258-278; these read ITPTSQGTTAV and MASS…DSTT.

Its subcellular location is the nucleus. In terms of biological role, transcription factor that specifically regulates the expression of the gene cluster that mediates the biosynthesis of the mycotoxins phomacins, leucine-derived cytochalasans with potent actin polymerization-inhibitory activities and monocot-specific antigerminative activities. The chain is Phomacin cluster regulator phmR from Phaeosphaeria nodorum (strain SN15 / ATCC MYA-4574 / FGSC 10173) (Glume blotch fungus).